The primary structure comprises 353 residues: Photosystem II protein D1 (353 aa).

Thr-2 carries the N-acetylthreonine modification. Residue Thr-2 is modified to Phosphothreonine. The next 3 helical transmembrane spans lie at 29–46 (YIGWFGVLMIPTLLTATS), 118–133 (HFLLGVACYMGREWEL), and 142–156 (WIAVAYSAPVAAATA). His-118 is a chlorophyll a binding site. Tyr-126 contacts pheophytin a. 2 residues coordinate [CaMn4O5] cluster: Asp-170 and Glu-189. Residues 197–218 (FHMLGVAGVFGGSLFSAMHGSL) traverse the membrane as a helical segment. His-198 is a binding site for chlorophyll a. A quinone contacts are provided by residues His-215 and 264-265 (SF). His-215 lines the Fe cation pocket. His-272 is a binding site for Fe cation. A helical transmembrane segment spans residues 274–288 (FLAAWPVVGIWFTAL). The [CaMn4O5] cluster site is built by His-332, Glu-333, Asp-342, and Ala-344. Positions 345–353 (AIEAPSTNG) are excised as a propeptide.

This sequence belongs to the reaction center PufL/M/PsbA/D family. PSII is composed of 1 copy each of membrane proteins PsbA, PsbB, PsbC, PsbD, PsbE, PsbF, PsbH, PsbI, PsbJ, PsbK, PsbL, PsbM, PsbT, PsbX, PsbY, PsbZ, Psb30/Ycf12, at least 3 peripheral proteins of the oxygen-evolving complex and a large number of cofactors. It forms dimeric complexes. The cofactor is The D1/D2 heterodimer binds P680, chlorophylls that are the primary electron donor of PSII, and subsequent electron acceptors. It shares a non-heme iron and each subunit binds pheophytin, quinone, additional chlorophylls, carotenoids and lipids. D1 provides most of the ligands for the Mn4-Ca-O5 cluster of the oxygen-evolving complex (OEC). There is also a Cl(-1) ion associated with D1 and D2, which is required for oxygen evolution. The PSII complex binds additional chlorophylls, carotenoids and specific lipids.. In terms of processing, tyr-161 forms a radical intermediate that is referred to as redox-active TyrZ, YZ or Y-Z. C-terminally processed by CTPA; processing is essential to allow assembly of the oxygen-evolving complex and thus photosynthetic growth.

It is found in the plastid. The protein resides in the chloroplast thylakoid membrane. It carries out the reaction 2 a plastoquinone + 4 hnu + 2 H2O = 2 a plastoquinol + O2. Photosystem II (PSII) is a light-driven water:plastoquinone oxidoreductase that uses light energy to abstract electrons from H(2)O, generating O(2) and a proton gradient subsequently used for ATP formation. It consists of a core antenna complex that captures photons, and an electron transfer chain that converts photonic excitation into a charge separation. The D1/D2 (PsbA/PsbD) reaction center heterodimer binds P680, the primary electron donor of PSII as well as several subsequent electron acceptors. The sequence is that of Photosystem II protein D1 from Petunia hybrida (Petunia).